Here is a 597-residue protein sequence, read N- to C-terminus: Protein unc-93 homolog B1 (597 aa).

The segment at 1-29 is disordered; the sequence is MEAEPPLYPMAGAAGPQGDEDLLGVPDGP. 5 helical membrane-spanning segments follow: residues 64-84, 110-130, 132-152, 160-180, and 223-243; these read VLAA…LLQM, KMLM…PVLI, FFGT…FVST, TLVP…ASMG, and IFYS…IYFL. Residues Asn-251 and Asn-272 are each glycosylated (N-linked (GlcNAc...) asparagine). 5 helical membrane passes run 285–305, 343–363, 378–398, 403–423, and 428–448; these read LIVV…LVLG, LVPF…GIAL, LLVA…LGLW, VPLV…FFWA, and VLQH…GSAL. Asn-449 is a glycosylation site (N-linked (GlcNAc...) asparagine). A run of 2 helical transmembrane segments spans residues 469 to 489 and 491 to 511; these read FIFT…YLGS and LHMK…AVSY. Positions 522–597 are disordered; it reads VAPRQPRIPR…AQGGDGPEEQ (76 aa). A phosphoserine mark is found at Ser-547 and Ser-550.

This sequence belongs to the unc-93 family. In terms of assembly, interacts with TLR3, TLR5, TLR7, and TLR9 (probably via transmembrane domain). Post-translationally, N-glycosylated. Expressed in plasmocytoid dendritic cells (at protein level). Highly expressed in antigen-presenting cells. Expressed in heart, and at lower level in kidney. Expressed at low level in other tissues.

Its subcellular location is the endoplasmic reticulum membrane. The protein localises to the endosome. It localises to the lysosome. The protein resides in the cytoplasmic vesicle. It is found in the phagosome. Its function is as follows. Plays an important role in innate and adaptive immunity by regulating nucleotide-sensing Toll-like receptor (TLR) signaling. Required for the transport of a subset of TLRs (including TLR3, TLR7 and TLR9) from the endoplasmic reticulum to endolysosomes where they can engage pathogen nucleotides and activate signaling cascades. May play a role in autoreactive B-cells removal. In Homo sapiens (Human), this protein is Protein unc-93 homolog B1.